A 269-amino-acid polypeptide reads, in one-letter code: uncharacterized protein (269 aa).

The segment covering M1–K16 has biased composition (pro residues). Disordered regions lie at residues M1 to G110 and I157 to Q269. The segment covering A21–S45 has biased composition (polar residues). Residues T46–Q58 show a composition bias toward low complexity. The segment covering S80–I93 has biased composition (polar residues). Low complexity predominate over residues Q159 to P181. Residues L182–S195 show a composition bias toward polar residues. The segment covering P198–I213 has biased composition (pro residues).

This is an uncharacterized protein from Dictyostelium discoideum (Social amoeba).